A 349-amino-acid chain; its full sequence is MNRVVVGLSGGVDSSTAAASLHHQGYDVVGLTLWLMKGKGQCCSEGMVDAAFICEQLGIPHHIVDSRDVFEKNIIDYLVSGYEVGITPLPCSQCNRAVKFGPMLNYARQELGIDRIATGHYARIGYDEVSGRYQLLRAVDRNKDQSYFLYDLTQDLLAATLFPLGNQTKEETRRIAHEFGLKTADKPESQDLCLIEAHGSMQEFLDKYIKQKEGDIVDLKGKVLGKHKGIHHYTIGQRKGLGVAAPEPLYVVKLDPIMNRVIVGNRADAGQSECNVSRMNWVSIPDPSTPIQTEAQVRYRSFPVRVNVIPLGDNRITLVFDEPQFGITPGQAAVLYQGDILLGGGIIEK.

Residues 7–14 and leucine 33 each bind ATP; that span reads GLSGGVDS. The Nucleophile role is filled by cysteine 94. Cysteine 94 and cysteine 193 are joined by a disulfide. Glycine 119 contacts ATP. The interval 143–145 is interaction with tRNA; the sequence is KDQ. Cysteine 193 acts as the Cysteine persulfide intermediate in catalysis. The segment at 298–299 is interaction with tRNA; it reads RY.

It belongs to the MnmA/TRMU family.

The protein resides in the cytoplasm. The enzyme catalyses S-sulfanyl-L-cysteinyl-[protein] + uridine(34) in tRNA + AH2 + ATP = 2-thiouridine(34) in tRNA + L-cysteinyl-[protein] + A + AMP + diphosphate + H(+). Catalyzes the 2-thiolation of uridine at the wobble position (U34) of tRNA, leading to the formation of s(2)U34. The chain is tRNA-specific 2-thiouridylase MnmA from Gloeothece citriformis (strain PCC 7424) (Cyanothece sp. (strain PCC 7424)).